Consider the following 90-residue polypeptide: U7-theraphotoxin-Hhn1a 2 (90 aa).

A signal peptide spans 1-19; that stretch reads MKIAIFTVVLALAVFAVLS. Residues 20–50 constitute a propeptide that is removed on maturation; that stretch reads FGWEANEKALSEEFTELIHEKEAASETEARE. Disulfide bonds link cysteine 51–cysteine 65, cysteine 58–cysteine 70, and cysteine 64–cysteine 81.

It belongs to the neurotoxin 10 (Hwtx-1) family. 13 (Hntx-13) subfamily. As to expression, expressed by the venom gland.

The protein resides in the secreted. In terms of biological role, ion channel inhibitor. The chain is U7-theraphotoxin-Hhn1a 2 from Cyriopagopus hainanus (Chinese bird spider).